The primary structure comprises 695 residues: MSTLDRSIQARARAHLFGLLRAGFRAIPLSDATRDRWRSWFLDRHADWVPEPVRGRANHAISRRPTARSDEAAIGHVAYRTTALPETLPATLVAFYLPQFHPIPENDAWWGKGFTEWRNVSRTLPQFEGHQQPRLPADLGFYDLRTPDVMREQARLAQEYGLGAFCFYFYWFAGKTLLEMPITQWHADTSITLPFCLCWANEKWARRWDGRGHDVLIDQAHSADDDLAFIAHVARYMRNPKYLRVGDRPLLLVYRPHLLPEPVQTAARWRNWCRDNGIGEIHLAYVQGFERPDPRDIGFDAAVEFPPNMSTPPSVTARQRLVNPDFSGDVFDWRELARDMEQRPLRDYTLYPGVNPGWDNEPRRSGKGRIYLHASPRRYRDWLARTVQHRLANAPSAHRMVFINAWNEWAEGAVLEPDARLGYAWLDATRQALTRAPDVATEICSPSACVVLHAWYLDVLDEMLDAIVECGTPLRIIITTDLTKVIEVTKCIQRRGIQAEVEGFENRGRDILPFLHVANRLLDENVQLVLKLHTKKSTHRDDGNAWRGEMLTALLGPQRVDAIVNAFSTDPLVGLAAPEDHLLPVTEFIGGNADALDYLTVRTGSDAPDTNSLFASGSMFWARLEALRPLLDAHLHASEFESEQGQIDGTLAHAIERFVGLAVTHSGHRVTTVEQTLGITKTPSAQPYRYARKAP.

This is an uncharacterized protein from Xanthomonas campestris pv. campestris (strain B100).